The primary structure comprises 1121 residues: Cuscuta receptor 1 (1121 aa).

Residues 1 to 20 (MGNIKFLLLVFFLIVVVVNG) form the signal peptide. Topologically, residues 21–1058 (CWEEERNALL…EESSELEDIQ (1038 aa)) are extracellular. N-linked (GlcNAc...) asparagine glycosylation occurs at asparagine 91. LRR repeat units follow at residues 98–122 (FKSLQVLLLSSQNIIGWTKNEGFSK), 126–152 (LPNLKEVDLQYNPIDPKVLLSSLCWIS), 185–209 (LSNLRELWFEGYEINDINILSALGE), 210–233 (LRNLEKLILDDNNFNSTIFSSLKI), 234–259 (FPSLKHLNLAANEINGNVEMNDIIDL), 260–282 (SNLEYLDLSDNNIHSFATTKGNK), 284–308 (MTSLRSLLLGSSYSNSSRVIRSLKS), and 309–331 (FSSLKSLSYKNSNLTSPSIIYAL). The N-linked (GlcNAc...) asparagine glycan is linked to asparagine 224. N-linked (GlcNAc...) asparagine glycosylation is found at asparagine 298, asparagine 321, and asparagine 333. An LRR 9 repeat occupies 334 to 360 (LSTVEYLYFKGSSLNDNFLPNIGQMTS). N-linked (GlcNAc...) asparagine glycans are attached at residues asparagine 372 and asparagine 406. 21 LRR repeats span residues 383 to 406 (LKYIEELDFLNNNFVGTLPLCLGN), 407 to 432 (LTSLRWLSLAGNNLHGNIASHSIWRR), 433 to 457 (LTSLEYLDIADNQFDVPLSFSQFSD), 459 to 479 (KKLIYLNVGYNTIITDTEYQN), 507 to 531 (QYDLRILAIEGNQLQGKFPTWLLEN), 556 to 580 (HLHLEAVDVSNNKLNGHIPQNMSLA), 581 to 605 (FPKLLSLNMSHNHLEGPIPSKISGI), 607 to 628 (LTILDLSVNFLSGEVPGDLAVV), 630 to 654 (SPQLFYLRLSNNKLKGKIFSEEFRP), 655 to 678 (HVLSFLYLNDNNFEGALPSNVFLS), 680 to 701 (LITLDASRNNFSGEIPGCTRDN), 702 to 725 (RRLLQLDLSKNHLQGLIPVEICNL), 726 to 749 (KIINVLAISENKISGSIPSCVSSL), 751 to 772 (LKHIHLQKNQLGGELGHVIFNF), 773 to 796 (SSLITLDLRYNNFAGNIPYTIGSL), 797 to 820 (SNLNYLLLSNNKLEGDIPTQICML), 822 to 846 (NLSIVDLSFNKLYGPLPPCLGYLTQ), 914 to 938 (LKYMSGIDLSSNRLTGEIPVELGNM), 939 to 961 (SNIHALNLSHNHLNGRIPNTFSN), 962 to 986 (LQEIESLDLSCNRLNGSIPVGLLEL), and 988 to 1012 (SLAVFSVAYNNLSGAVPDFKAQFGT). Residues asparagine 531, asparagine 576, and asparagine 588 are each glycosylated (N-linked (GlcNAc...) asparagine). The N-linked (GlcNAc...) asparagine glycan is linked to asparagine 689. Asparagine 771 is a glycosylation site (N-linked (GlcNAc...) asparagine). N-linked (GlcNAc...) asparagine glycans are attached at residues asparagine 822, asparagine 937, asparagine 945, asparagine 976, asparagine 998, asparagine 1014, and asparagine 1041. A helical membrane pass occupies residues 1059–1079 (CFYIGFVVSFGAILLGLAAAL). Residues 1080–1121 (CLNRHWRRAWFRMIEALMFYCYYFVLDNIVTPIKSRWYKNVG) are Cytoplasmic-facing.

It belongs to the RLP family. As to quaternary structure, interacts with an 11 kDa glycine-rich protein (GRP) of C.reflexa. Interacts with SOBIR1 and SOBIR1-like kinases; presence or absence of GRP has no effect on interaction.

It is found in the cell membrane. It localises to the cell surface. Its function is as follows. Involved in plant defense. Contributes to resistance against parasitic plant C.reflexa. Acts as a receptor for the 11 kDa glycine-rich protein (GRP) of C.reflexa inducing immune responses such as emission of stress-related phytohormone ethylene, reactive oxygen species (ROS) release, and hypersensitive cell death. Recognizes a specific pathogen-associated molecular pattern (PAMP), a cysteine-rich peptide 21 (crip21), from GRP located on the cell wall of C.reflexa. This Solanum lycopersicum (Tomato) protein is Cuscuta receptor 1.